The chain runs to 302 residues: 1D-myo-inositol 2-acetamido-2-deoxy-alpha-D-glucopyranoside deacetylase (302 aa).

His12, Asp15, and His147 together coordinate Zn(2+).

Belongs to the MshB deacetylase family. Requires Zn(2+) as cofactor.

It carries out the reaction 1D-myo-inositol 2-acetamido-2-deoxy-alpha-D-glucopyranoside + H2O = 1D-myo-inositol 2-amino-2-deoxy-alpha-D-glucopyranoside + acetate. In terms of biological role, catalyzes the deacetylation of 1D-myo-inositol 2-acetamido-2-deoxy-alpha-D-glucopyranoside (GlcNAc-Ins) in the mycothiol biosynthesis pathway. This Thermobispora bispora (strain ATCC 19993 / DSM 43833 / CBS 139.67 / JCM 10125 / KCTC 9307 / NBRC 14880 / R51) protein is 1D-myo-inositol 2-acetamido-2-deoxy-alpha-D-glucopyranoside deacetylase.